The chain runs to 101 residues: Large ribosomal subunit protein uL24 (101 aa).

It belongs to the universal ribosomal protein uL24 family. In terms of assembly, part of the 50S ribosomal subunit.

Its function is as follows. One of two assembly initiator proteins, it binds directly to the 5'-end of the 23S rRNA, where it nucleates assembly of the 50S subunit. Functionally, one of the proteins that surrounds the polypeptide exit tunnel on the outside of the subunit. The chain is Large ribosomal subunit protein uL24 from Streptococcus pyogenes serotype M1.